The sequence spans 160 residues: Ribosomal RNA large subunit methyltransferase H (160 aa).

Residues Leu76, Gly108, and Leu127–Trp132 each bind S-adenosyl-L-methionine.

The protein belongs to the RNA methyltransferase RlmH family. In terms of assembly, homodimer.

It is found in the cytoplasm. It catalyses the reaction pseudouridine(1915) in 23S rRNA + S-adenosyl-L-methionine = N(3)-methylpseudouridine(1915) in 23S rRNA + S-adenosyl-L-homocysteine + H(+). Its function is as follows. Specifically methylates the pseudouridine at position 1915 (m3Psi1915) in 23S rRNA. This Sinorhizobium fredii (strain NBRC 101917 / NGR234) protein is Ribosomal RNA large subunit methyltransferase H.